A 55-amino-acid chain; its full sequence is Large ribosomal subunit protein bL33 (55 aa).

Belongs to the bacterial ribosomal protein bL33 family.

The sequence is that of Large ribosomal subunit protein bL33 from Xanthobacter autotrophicus (strain ATCC BAA-1158 / Py2).